Reading from the N-terminus, the 195-residue chain is UPF0157 protein BH1888 (195 aa).

Positions 1 to 12 (MPPMKDSSNSTP) are enriched in polar residues. A disordered region spans residues 1–21 (MPPMKDSSNSTPRTDEELQEV).

Belongs to the UPF0157 (GrpB) family.

The protein is UPF0157 protein BH1888 of Halalkalibacterium halodurans (strain ATCC BAA-125 / DSM 18197 / FERM 7344 / JCM 9153 / C-125) (Bacillus halodurans).